The sequence spans 231 residues: ATP-dependent dethiobiotin synthetase BioD 2 (231 aa).

Residue Ser-13–Val-18 participates in ATP binding. Thr-17 contacts Mg(2+). Residue Lys-38 is part of the active site. ATP-binding positions include Asp-55, Glu-112–Gly-115, Asn-172–Arg-173, Pro-201–Leu-203, and Gln-208. Residues Asp-55 and Glu-112 each coordinate Mg(2+).

It belongs to the dethiobiotin synthetase family. Homodimer. Requires Mg(2+) as cofactor.

It is found in the cytoplasm. It catalyses the reaction (7R,8S)-7,8-diammoniononanoate + CO2 + ATP = (4R,5S)-dethiobiotin + ADP + phosphate + 3 H(+). Its pathway is cofactor biosynthesis; biotin biosynthesis; biotin from 7,8-diaminononanoate: step 1/2. In terms of biological role, catalyzes a mechanistically unusual reaction, the ATP-dependent insertion of CO2 between the N7 and N8 nitrogen atoms of 7,8-diaminopelargonic acid (DAPA, also called 7,8-diammoniononanoate) to form a ureido ring. The polypeptide is ATP-dependent dethiobiotin synthetase BioD 2 (Salmonella typhi).